The sequence spans 299 residues: RING-H2 finger protein ATL20 (299 aa).

Residues 172 to 192 (LIITLCIIGGITATCIAAIRI) traverse the membrane as a helical segment. The RING-type; atypical zinc finger occupies 253–295 (CPICLSEYASKETVRCMPECDHCFHVQCIDEWLKIHSSCPVCR).

It belongs to the RING-type zinc finger family. ATL subfamily.

It localises to the membrane. The catalysed reaction is S-ubiquitinyl-[E2 ubiquitin-conjugating enzyme]-L-cysteine + [acceptor protein]-L-lysine = [E2 ubiquitin-conjugating enzyme]-L-cysteine + N(6)-ubiquitinyl-[acceptor protein]-L-lysine.. It participates in protein modification; protein ubiquitination. The sequence is that of RING-H2 finger protein ATL20 (ATL20) from Arabidopsis thaliana (Mouse-ear cress).